A 101-amino-acid chain; its full sequence is Urinary protein 2 (101 aa).

Positions Met1 to Ala21 are cleaved as a signal peptide. The UPAR/Ly6 domain occupies Leu22–Val99. Cystine bridges form between Cys24/Cys51, Cys27/Cys36, Cys43/Cys70, Cys73/Cys89, and Cys90/Cys96. Asn67 and Asn74 each carry an N-linked (GlcNAc...) asparagine glycan.

In terms of processing, N-glycosylated.

The protein localises to the secreted. This is Urinary protein 2 from Rattus norvegicus (Rat).